The chain runs to 327 residues: Glycolipid sulfotransferase BCG_1434 (327 aa).

40–45 lines the 3'-phosphoadenylyl sulfate pocket; sequence KSGLTW. His97 functions as the Proton acceptor in the catalytic mechanism. Residue 116 to 124 coordinates 3'-phosphoadenylyl sulfate; the sequence is RDPRDAAVS.

Belongs to the sulfotransferase 1 family.

Involved in the synthesis of cell wall sulfolipids. The chain is Glycolipid sulfotransferase BCG_1434 from Mycobacterium bovis (strain BCG / Pasteur 1173P2).